Here is a 246-residue protein sequence, read N- to C-terminus: Homeobox protein Crxos (246 aa).

2 DNA-binding regions (homeobox) span residues 22-72 (WEQL…EMRP) and 129-182 (ELTD…RGYR). The Nuclear localization signal signature appears at 163 to 177 (RKDLIRSWFITQRHR).

Belongs to the paired homeobox family. In terms of tissue distribution, specifically expressed during the preimplantation stages of embryonic development, between the four-cell to eight-cell stage and the morula stage. Expressed in adult testis. Detected in early embryos; expression decreases gradually with embryonic development. Also expressed in extraembryonic tissues after E14.5, expression level increases drastically until E18.5, immediately before partum.

It localises to the nucleus. Functionally, transcription factor that acts as a regulator of embryonic stem cell differentiation during the preimplantation stages of embryonic development. Its function is as follows. Transcription factor that acts as a positive regulator of embryonic stem cell differentiation. Transcription factor that promotes embryonic stem cell pluripotency. In terms of biological role, transcription factor that promotes embryonic stem cell pluripotency. Also involved in extraembryonic tissues development by promoting the expression of placental prolactin family genes. The polypeptide is Homeobox protein Crxos (Mus musculus (Mouse)).